The sequence spans 306 residues: Homeobox protein Hox-C13a (306 aa).

A disordered region spans residues 68 to 90 (SVYSDISSPDTGRQCPAPQTSSS). The homeobox DNA-binding region spans 236-295 (GRKKRVPYTKLQLKELEKEYAASKFITKDKRRRISAATNLSERQVTIWFQNRRVKEKKFI).

Belongs to the Abd-B homeobox family.

The protein localises to the nucleus. Its function is as follows. Sequence-specific transcription factor which is part of a developmental regulatory system that provides cells with specific positional identities on the anterior-posterior axis. The chain is Homeobox protein Hox-C13a (hoxc13a) from Takifugu rubripes (Japanese pufferfish).